Reading from the N-terminus, the 491-residue chain is Chromosomal replication initiator protein DnaA (491 aa).

A domain I, interacts with DnaA modulators region spans residues 1–69 (MTTWDKCLKK…TIQECHGNDL (69 aa)). The interval 69 to 154 (LIIEYSNKKF…KEDEEYSFGL (86 aa)) is domain II. Positions 155–371 (PLKEKYVFDS…GALNRVLTTS (217 aa)) are domain III, AAA+ region. Residues G199, G201, K202, and T203 each contribute to the ATP site. The segment at 372-491 (KFNHKDPTIE…YELLLDKISR (120 aa)) is domain IV, binds dsDNA.

It belongs to the DnaA family. As to quaternary structure, oligomerizes as a right-handed, spiral filament on DNA at oriC.

Its subcellular location is the cytoplasm. Its function is as follows. Plays an essential role in the initiation and regulation of chromosomal replication. ATP-DnaA binds to the origin of replication (oriC) to initiate formation of the DNA replication initiation complex once per cell cycle. Binds the DnaA box (a 9 base pair repeat at the origin) and separates the double-stranded (ds)DNA. Forms a right-handed helical filament on oriC DNA; dsDNA binds to the exterior of the filament while single-stranded (ss)DNA is stabiized in the filament's interior. The ATP-DnaA-oriC complex binds and stabilizes one strand of the AT-rich DNA unwinding element (DUE), permitting loading of DNA polymerase. After initiation quickly degrades to an ADP-DnaA complex that is not apt for DNA replication. Binds acidic phospholipids. This Francisella tularensis subsp. holarctica (strain OSU18) protein is Chromosomal replication initiator protein DnaA.